A 77-amino-acid chain; its full sequence is MMSKGVLVGVVTDARRDKTVKVSVYRMVHHKVYKKIVKKCRIYSVHDEHNRCKRGDVVKIREHIPVSATKRWIVVDS.

This sequence belongs to the universal ribosomal protein uS17 family. In terms of assembly, part of the 30S ribosomal subunit.

Functionally, one of the primary rRNA binding proteins, it binds specifically to the 5'-end of 16S ribosomal RNA. This Anaplasma marginale (strain St. Maries) protein is Small ribosomal subunit protein uS17.